The following is a 432-amino-acid chain: Adenylosuccinate synthetase (432 aa).

GTP contacts are provided by residues 13-19 (GDEGKGK) and 41-43 (GHT). Asp-14 serves as the catalytic Proton acceptor. Positions 14 and 41 each coordinate Mg(2+). Residues 14-17 (DEGK), 39-42 (NAGH), Thr-130, Arg-144, Gln-225, Thr-240, and Arg-304 contribute to the IMP site. His-42 serves as the catalytic Proton donor. 300 to 306 (ATTGRSR) contacts substrate. GTP contacts are provided by residues Arg-306, 332–334 (KLD), and 415–417 (STG).

Belongs to the adenylosuccinate synthetase family. As to quaternary structure, homodimer. Requires Mg(2+) as cofactor.

The protein resides in the cytoplasm. The enzyme catalyses IMP + L-aspartate + GTP = N(6)-(1,2-dicarboxyethyl)-AMP + GDP + phosphate + 2 H(+). It functions in the pathway purine metabolism; AMP biosynthesis via de novo pathway; AMP from IMP: step 1/2. Plays an important role in the de novo pathway of purine nucleotide biosynthesis. Catalyzes the first committed step in the biosynthesis of AMP from IMP. This chain is Adenylosuccinate synthetase, found in Yersinia pseudotuberculosis serotype O:1b (strain IP 31758).